Consider the following 666-residue polypeptide: E3 ubiquitin-protein ligase MBR2 (666 aa).

4 stretches are compositionally biased toward polar residues: residues 1 to 14 (MQGP…STGI), 23 to 35 (CSTN…NNIL), 42 to 58 (FPNN…ASSS), and 73 to 88 (SSSR…SNGS). Disordered stretches follow at residues 1-58 (MQGP…ASSS), 73-95 (SSSR…RQLL), 155-179 (SLGS…GLGS), 221-329 (SSLS…DGQP), 400-433 (NPST…TPHN), and 457-491 (GASL…RQRR). Residues 221 to 239 (SSLSLSMPSQNSPNVNNQS) show a composition bias toward low complexity. 3 stretches are compositionally biased toward polar residues: residues 258–268 (AFPSTRSTETI), 286–303 (FSFT…QLPA), and 414–433 (GSSS…TPHN). Residues 619 to 660 (CCVCQEEYAEGDDLGTLGCGHEFHTACVKQWLMLKNLCPICK) form an RING-type; atypical zinc finger.

Belongs to the RING-type zinc finger family. As to quaternary structure, interacts with MED25 and UBC11.

It carries out the reaction S-ubiquitinyl-[E2 ubiquitin-conjugating enzyme]-L-cysteine + [acceptor protein]-L-lysine = [E2 ubiquitin-conjugating enzyme]-L-cysteine + N(6)-ubiquitinyl-[acceptor protein]-L-lysine.. It functions in the pathway protein modification; protein ubiquitination. E3 ubiquitin-protein ligase that functions as a regulator of MED25 stability by targeting MED25 for degradation in a RING-H2-dependent way. Proteasome-dependent degradation of MED25 seems to activate its function as positive regulator of FLOWERING LOCUS T (FT) and is important to induce the expression of FT and consequently to promote flowering. May function downstream of HAL3 and be required for HAL3-regulated plant growth. Activation of MBR2 by HAL3 may lead to the degradation of cell cycle suppressors, resulting in enhancement of cell division and plant growth. In Arabidopsis thaliana (Mouse-ear cress), this protein is E3 ubiquitin-protein ligase MBR2 (MBR2).